Here is a 363-residue protein sequence, read N- to C-terminus: 3-isopropylmalate dehydrogenase (363 aa).

Residue 78 to 91 participates in NAD(+) binding; that stretch reads GPKWEHLPPDQQPE. The substrate site is built by R99, R109, R138, and D227. 3 residues coordinate Mg(2+): D227, D251, and D255. 285–297 is an NAD(+) binding site; it reads GSAPDIAGKNIAN.

Belongs to the isocitrate and isopropylmalate dehydrogenases family. LeuB type 1 subfamily. As to quaternary structure, homodimer. Requires Mg(2+) as cofactor. Mn(2+) serves as cofactor.

Its subcellular location is the cytoplasm. It carries out the reaction (2R,3S)-3-isopropylmalate + NAD(+) = 4-methyl-2-oxopentanoate + CO2 + NADH. Its pathway is amino-acid biosynthesis; L-leucine biosynthesis; L-leucine from 3-methyl-2-oxobutanoate: step 3/4. With respect to regulation, requires K(+) ions for optimum activity. Catalyzes the oxidation of 3-carboxy-2-hydroxy-4-methylpentanoate (3-isopropylmalate) to 3-carboxy-4-methyl-2-oxopentanoate. The product decarboxylates to 4-methyl-2 oxopentanoate. This Escherichia coli (strain K12) protein is 3-isopropylmalate dehydrogenase.